The following is a 190-amino-acid chain: GTP cyclohydrolase 1 (190 aa).

Residues C75, H78, and C146 each contribute to the Zn(2+) site.

The protein belongs to the GTP cyclohydrolase I family. In terms of assembly, homomer.

It catalyses the reaction GTP + H2O = 7,8-dihydroneopterin 3'-triphosphate + formate + H(+). It functions in the pathway cofactor biosynthesis; 7,8-dihydroneopterin triphosphate biosynthesis; 7,8-dihydroneopterin triphosphate from GTP: step 1/1. In Campylobacter concisus (strain 13826), this protein is GTP cyclohydrolase 1.